The sequence spans 211 residues: Small ribosomal subunit protein uS3c (211 aa).

Residues 39–109 (IREFAESRLP…NVALYVTKTQ (71 aa)) enclose the KH type-2 domain.

Belongs to the universal ribosomal protein uS3 family. As to quaternary structure, part of the 30S ribosomal subunit.

Its subcellular location is the plastid. The protein localises to the chloroplast. This is Small ribosomal subunit protein uS3c (rps3) from Ostreococcus tauri.